An 870-amino-acid chain; its full sequence is Lon protease (870 aa).

Positions 1 to 270 (MPTNSYRFLV…KLYEHIHTFA (270 aa)) constitute a Lon N-terminal domain. Residue 454-461 (GPPGTGKT) participates in ATP binding. The Lon proteolytic domain occupies 691–870 (SPQIGTVTGL…YQQIYDFIFK (180 aa)). Catalysis depends on residues S777 and K820.

It belongs to the peptidase S16 family. As to quaternary structure, homohexamer. Organized in a ring with a central cavity.

Its subcellular location is the cytoplasm. The catalysed reaction is Hydrolysis of proteins in presence of ATP.. Its function is as follows. ATP-dependent serine protease that mediates the selective degradation of mutant and abnormal proteins as well as certain short-lived regulatory proteins. Required for cellular homeostasis and for survival from DNA damage and developmental changes induced by stress. Degrades polypeptides processively to yield small peptide fragments that are 5 to 10 amino acids long. Binds to DNA in a double-stranded, site-specific manner. The polypeptide is Lon protease (Mesomycoplasma hyopneumoniae (strain 232) (Mycoplasma hyopneumoniae)).